Reading from the N-terminus, the 535-residue chain is T-complex protein 1 subunit epsilon (535 aa).

It belongs to the TCP-1 chaperonin family. As to quaternary structure, heterooligomeric complex of about 850 to 900 kDa that forms two stacked rings, 12 to 16 nm in diameter.

It is found in the cytoplasm. Its function is as follows. Molecular chaperone; assists the folding of proteins upon ATP hydrolysis. Known to play a role, in vitro, in the folding of actin and tubulin. In Arabidopsis thaliana (Mouse-ear cress), this protein is T-complex protein 1 subunit epsilon.